Reading from the N-terminus, the 607-residue chain is Probable CoA ligase CCL8 (607 aa).

ATP contacts are provided by residues 236-244 (TSGTTGKPK), 391-396 (ERYGMT), D474, 486-489 (ILGR), and K591. Positions 305–391 (SVRGIWQRWR…QTITGHRLLE (87 aa)) are SBD1. An SBD2 region spans residues 392 to 453 (RYGMTEFVMA…VRSPSLFKEY (62 aa)).

The protein belongs to the ATP-dependent AMP-binding enzyme family. Mostly expressed at low levels in glandular trichomes (lupulin glands) after flowering, and, to a lower extent, in stems, leaves, flowers and cones.

It is found in the cytoplasm. Its subcellular location is the cytosol. The polypeptide is Probable CoA ligase CCL8 (Humulus lupulus (European hop)).